The following is a 233-amino-acid chain: UPF0502 protein Mpe_A1449 (233 aa).

It belongs to the UPF0502 family.

The sequence is that of UPF0502 protein Mpe_A1449 from Methylibium petroleiphilum (strain ATCC BAA-1232 / LMG 22953 / PM1).